Reading from the N-terminus, the 464-residue chain is Glycine--tRNA ligase (464 aa).

The substrate site is built by Arg104 and Glu175. ATP contacts are provided by residues 207–209 (RNE), 217–222 (FRTREF), 292–293 (EL), and 336–339 (GVNR). Residue 222-226 (FEQME) coordinates substrate. 332-336 (EPALG) contacts substrate.

The protein belongs to the class-II aminoacyl-tRNA synthetase family. As to quaternary structure, homodimer.

It localises to the cytoplasm. It catalyses the reaction tRNA(Gly) + glycine + ATP = glycyl-tRNA(Gly) + AMP + diphosphate. Its function is as follows. Catalyzes the attachment of glycine to tRNA(Gly). This chain is Glycine--tRNA ligase, found in Leptospira interrogans serogroup Icterohaemorrhagiae serovar Lai (strain 56601).